The chain runs to 273 residues: Putative phosphoenolpyruvate synthase regulatory protein (273 aa).

153-160 (GVSRCGKT) contributes to the ADP binding site.

This sequence belongs to the pyruvate, phosphate/water dikinase regulatory protein family. PSRP subfamily.

It carries out the reaction [pyruvate, water dikinase] + ADP = [pyruvate, water dikinase]-phosphate + AMP + H(+). The catalysed reaction is [pyruvate, water dikinase]-phosphate + phosphate + H(+) = [pyruvate, water dikinase] + diphosphate. Its function is as follows. Bifunctional serine/threonine kinase and phosphorylase involved in the regulation of the phosphoenolpyruvate synthase (PEPS) by catalyzing its phosphorylation/dephosphorylation. This chain is Putative phosphoenolpyruvate synthase regulatory protein, found in Pectobacterium atrosepticum (strain SCRI 1043 / ATCC BAA-672) (Erwinia carotovora subsp. atroseptica).